A 272-amino-acid chain; its full sequence is 3-hydroxyanthranilate 3,4-dioxygenase (272 aa).

Residues 1 to 154 form a domain A (catalytic) region; the sequence is MMEWIDENSS…SEEHKTGKPS (154 aa). Residue arginine 38 coordinates O2. Fe cation is bound by residues histidine 42, glutamate 48, and histidine 86. Glutamate 48 is a binding site for substrate. 2 residues coordinate substrate: arginine 90 and glutamate 100. Residues 155 to 169 form a linker region; that stretch reads KESSCSINVDTETEL. Positions 170-272 are domain B; that stretch reads MEPFPLKQWL…SITVDSLANK (103 aa).

It belongs to the 3-HAO family. It depends on Fe(2+) as a cofactor.

The protein resides in the cytoplasm. It carries out the reaction 3-hydroxyanthranilate + O2 = (2Z,4Z)-2-amino-3-carboxymuconate 6-semialdehyde. It participates in cofactor biosynthesis; NAD(+) biosynthesis; quinolinate from L-kynurenine: step 3/3. In terms of biological role, catalyzes the oxidative ring opening of 3-hydroxyanthranilate to 2-amino-3-carboxymuconate semialdehyde, which spontaneously cyclizes to quinolinate. The sequence is that of 3-hydroxyanthranilate 3,4-dioxygenase from Nematostella vectensis (Starlet sea anemone).